The sequence spans 52 residues: Large ribosomal subunit protein bL33 (52 aa).

This sequence belongs to the bacterial ribosomal protein bL33 family.

This is Large ribosomal subunit protein bL33 from Campylobacter jejuni subsp. jejuni serotype O:6 (strain 81116 / NCTC 11828).